A 228-amino-acid polypeptide reads, in one-letter code: Large ribosomal subunit protein uL23m (228 aa).

The disordered stretch occupies residues 194 to 228 (PEEEGWSEVEENLPLDESAESAAEESSSKGSETRQ). Residues 195–216 (EEEGWSEVEENLPLDESAESAA) show a composition bias toward acidic residues.

Belongs to the universal ribosomal protein uL23 family. As to quaternary structure, component of the mitochondrial large ribosomal subunit (mt-LSU). Mature N.crassa 74S mitochondrial ribosomes consist of a small (37S) and a large (54S) subunit. The 37S small subunit contains a 16S ribosomal RNA (16S mt-rRNA) and 32 different proteins. The 54S large subunit contains a 23S rRNA (23S mt-rRNA) and 42 different proteins. uL23m forms the wall of the exit tunnel.

Its subcellular location is the mitochondrion. In terms of biological role, component of the mitochondrial ribosome (mitoribosome), a dedicated translation machinery responsible for the synthesis of mitochondrial genome-encoded proteins, including at least some of the essential transmembrane subunits of the mitochondrial respiratory chain. The mitoribosomes are attached to the mitochondrial inner membrane and translation products are cotranslationally integrated into the membrane. The sequence is that of Large ribosomal subunit protein uL23m (mrp20) from Neurospora crassa (strain ATCC 24698 / 74-OR23-1A / CBS 708.71 / DSM 1257 / FGSC 987).